The following is a 351-amino-acid chain: MNPPKSAPDAQGLSYRDAGVDIDAGDALIDKIKPFAKKTLRDGVLGGIGGFGALFEVPKKYKEPVLVSGTDGVGTKLKLAFHLNKHDTVGQDLVAMSVNDILVQGAEPLFFLDYFACGKLDVDTAATVVKGIAHGCELSGCALIGGETAEMPGMYPDGEYDLAGFAVGAVEKSKIIDGSTIAEGDVVLGLASSGIHSNGFSLVRKIIERANPDLSADFHGRSLADTLMAPTRIYVKPLLALMQKLPVKGMAHITGGGLVENIPRVLREGLTAELDQNAWPLPPLFKWLQEHGGVADAEMHRVFNCGIGMAVIVSAADADAAIADLTAAGEQVWKIGTVRASREGEAQTVVV.

The protein belongs to the AIR synthase family.

The protein resides in the cytoplasm. The catalysed reaction is 2-formamido-N(1)-(5-O-phospho-beta-D-ribosyl)acetamidine + ATP = 5-amino-1-(5-phospho-beta-D-ribosyl)imidazole + ADP + phosphate + H(+). It functions in the pathway purine metabolism; IMP biosynthesis via de novo pathway; 5-amino-1-(5-phospho-D-ribosyl)imidazole from N(2)-formyl-N(1)-(5-phospho-D-ribosyl)glycinamide: step 2/2. The chain is Phosphoribosylformylglycinamidine cyclo-ligase from Burkholderia ambifaria (strain ATCC BAA-244 / DSM 16087 / CCUG 44356 / LMG 19182 / AMMD) (Burkholderia cepacia (strain AMMD)).